A 936-amino-acid polypeptide reads, in one-letter code: Protein translocase subunit SecA (936 aa).

ATP-binding positions include Q87, 105 to 109 (GEGKT), and D515. C920, C922, C931, and H932 together coordinate Zn(2+).

This sequence belongs to the SecA family. As to quaternary structure, monomer and homodimer. Part of the essential Sec protein translocation apparatus which comprises SecA, SecYEG and auxiliary proteins SecDF-YajC and YidC. The cofactor is Zn(2+).

Its subcellular location is the cell inner membrane. It is found in the cytoplasm. The catalysed reaction is ATP + H2O + cellular proteinSide 1 = ADP + phosphate + cellular proteinSide 2.. Functionally, part of the Sec protein translocase complex. Interacts with the SecYEG preprotein conducting channel. Has a central role in coupling the hydrolysis of ATP to the transfer of proteins into and across the cell membrane, serving both as a receptor for the preprotein-SecB complex and as an ATP-driven molecular motor driving the stepwise translocation of polypeptide chains across the membrane. This chain is Protein translocase subunit SecA, found in Paraburkholderia phytofirmans (strain DSM 17436 / LMG 22146 / PsJN) (Burkholderia phytofirmans).